A 371-amino-acid chain; its full sequence is Deoxyhypusine synthase (371 aa).

Residues 112–116, 138–140, E144, and D245 contribute to the NAD(+) site; these read SNLVT and SAG. 143–144 is a spermidine binding site; it reads EE. Spermidine is bound at residue D250. G291 contributes to the NAD(+) binding site. H296 serves as a coordination point for spermidine. 316 to 317 contacts NAD(+); the sequence is TG. Spermidine-binding positions include 322-324 and 331-337; these read GSD and EAVSWGK. The active-site Nucleophile is the K337. 350–351 is an NAD(+) binding site; sequence EA.

The protein belongs to the deoxyhypusine synthase family. The cofactor is NAD(+).

The enzyme catalyses [eIF5A protein]-L-lysine + spermidine = [eIF5A protein]-deoxyhypusine + propane-1,3-diamine. Its pathway is protein modification; eIF5A hypusination. Catalyzes the NAD-dependent oxidative cleavage of spermidine and the subsequent transfer of the butylamine moiety of spermidine to the epsilon-amino group of a critical lysine residue of the eIF-5A precursor protein to form the intermediate deoxyhypusine residue. This is the first step of the post-translational modification of that lysine into an unusual amino acid residue named hypusine. Hypusination is unique to mature eIF-5A factor and is essential for its function. The protein is Deoxyhypusine synthase of Caenorhabditis elegans.